The primary structure comprises 156 residues: Ribonuclease pancreatic (156 aa).

A signal peptide spans 1 to 28; sequence MALEKSLALLPLLVLVLLVLGWVQPSLG. The segment covering 33–43 has biased composition (basic and acidic residues); sequence AQKFQRQHMDS. The disordered stretch occupies residues 33 to 52; that stretch reads AQKFQRQHMDSDGSPSSNPT. Residues K35 and R38 each coordinate substrate. The Proton acceptor role is filled by H40. 4 disulfide bridges follow: C54-C112, C68-C123, C86-C138, and C93-C100. N-linked (GlcNAc...) asparagine glycosylation is present at N62. Substrate is bound by residues 69-73, K94, and R113; that span reads KPVNT. N-linked (GlcNAc...) asparagine glycosylation is present at N116. H147 serves as the catalytic Proton donor.

It belongs to the pancreatic ribonuclease family. In terms of assembly, monomer. Interacts with and forms tight 1:1 complexes with RNH1. Dimerization of two such complexes may occur. Interaction with RNH1 inhibits this protein.

The protein resides in the secreted. It catalyses the reaction an [RNA] containing cytidine + H2O = an [RNA]-3'-cytidine-3'-phosphate + a 5'-hydroxy-ribonucleotide-3'-[RNA].. The enzyme catalyses an [RNA] containing uridine + H2O = an [RNA]-3'-uridine-3'-phosphate + a 5'-hydroxy-ribonucleotide-3'-[RNA].. Endonuclease that catalyzes the cleavage of RNA on the 3' side of pyrimidine nucleotides. Acts on single-stranded and double-stranded RNA. This Saguinus oedipus (Cotton-top tamarin) protein is Ribonuclease pancreatic (RNASE1).